Here is a 245-residue protein sequence, read N- to C-terminus: Phosducin (245 aa).

The span at 1–14 shows a compositional bias: acidic residues; it reads MEEAKSQSLEEDFE. Positions 1 to 68 are disordered; sequence MEEAKSQSLE…RDNKDSKERF (68 aa). Residues 1-241 enclose the Phosducin domain; it reads MEEAKSQSLE…THALDQTNME (241 aa). The segment covering 59 to 68 has biased composition (basic and acidic residues); that stretch reads RDNKDSKERF. Ser-73 carries the phosphoserine; by PKA modification. The segment at 111 to 245 is thioredoxin fold; sequence YGFVYELETG…DQTNMEEDIE (135 aa).

The protein belongs to the phosducin family. Interacts with CRX. Forms a complex with the beta and gamma subunits of the GTP-binding protein, transducin. Light-induced changes in cyclic nucleotide levels modulate the phosphorylation of this protein by cAMP kinase.

Its subcellular location is the cytoplasm. The protein resides in the cytosol. It localises to the nucleus. The protein localises to the cell projection. It is found in the cilium. Its subcellular location is the photoreceptor outer segment. The protein resides in the photoreceptor inner segment. Functionally, inhibits the transcriptional activation activity of the cone-rod homeobox CRX. May participate in the regulation of visual phototransduction or in the integration of photoreceptor metabolism. In Felis catus (Cat), this protein is Phosducin (PDC).